The following is a 229-amino-acid chain: Large ribosomal subunit protein uL1 (229 aa).

Belongs to the universal ribosomal protein uL1 family. As to quaternary structure, part of the 50S ribosomal subunit.

In terms of biological role, binds directly to 23S rRNA. The L1 stalk is quite mobile in the ribosome, and is involved in E site tRNA release. Functionally, protein L1 is also a translational repressor protein, it controls the translation of the L11 operon by binding to its mRNA. This Thermus thermophilus (strain ATCC BAA-163 / DSM 7039 / HB27) protein is Large ribosomal subunit protein uL1.